The sequence spans 36 residues: Glucagon-2 (36 aa).

This sequence belongs to the glucagon family.

Its subcellular location is the secreted. Its function is as follows. Glucagon plays a key role in glucose metabolism and homeostasis. Regulates blood glucose by increasing gluconeogenesis and decreasing glycolysis. The protein is Glucagon-2 of Huso dauricus (Kaluga sturgeon).